The following is a 438-amino-acid chain: Glutamyl-tRNA reductase (438 aa).

Residues 49–52, serine 109, 114–116, and glutamine 120 each bind substrate; these read TCNR and EGQ. Cysteine 50 acts as the Nucleophile in catalysis. An NADP(+)-binding site is contributed by 197–202; the sequence is GAGKMS.

The protein belongs to the glutamyl-tRNA reductase family. In terms of assembly, homodimer.

It catalyses the reaction (S)-4-amino-5-oxopentanoate + tRNA(Glu) + NADP(+) = L-glutamyl-tRNA(Glu) + NADPH + H(+). It participates in porphyrin-containing compound metabolism; protoporphyrin-IX biosynthesis; 5-aminolevulinate from L-glutamyl-tRNA(Glu): step 1/2. It functions in the pathway porphyrin-containing compound metabolism; chlorophyll biosynthesis. Its function is as follows. Catalyzes the NADPH-dependent reduction of glutamyl-tRNA(Glu) to glutamate 1-semialdehyde (GSA). The chain is Glutamyl-tRNA reductase from Synechococcus elongatus (strain ATCC 33912 / PCC 7942 / FACHB-805) (Anacystis nidulans R2).